Reading from the N-terminus, the 152-residue chain is Putative pre-16S rRNA nuclease (152 aa).

Belongs to the YqgF nuclease family.

The protein localises to the cytoplasm. Functionally, could be a nuclease involved in processing of the 5'-end of pre-16S rRNA. The chain is Putative pre-16S rRNA nuclease from Nitrosococcus oceani (strain ATCC 19707 / BCRC 17464 / JCM 30415 / NCIMB 11848 / C-107).